We begin with the raw amino-acid sequence, 275 residues long: Trans-aconitate 2-methyltransferase (275 aa).

The protein belongs to the methyltransferase superfamily. Tam family.

The protein resides in the cytoplasm. The enzyme catalyses trans-aconitate + S-adenosyl-L-methionine = (E)-3-(methoxycarbonyl)pent-2-enedioate + S-adenosyl-L-homocysteine. Its function is as follows. Catalyzes the S-adenosylmethionine monomethyl esterification of trans-aconitate. This chain is Trans-aconitate 2-methyltransferase, found in Pseudomonas aeruginosa (strain UCBPP-PA14).